A 234-amino-acid chain; its full sequence is Gem-associated protein 8 (234 aa).

The interval 60-116 is disordered; the sequence is LAQSPAAKGGTSPKSRSKSPSASGDACRRRSRPGKPGPQRRSTEKPARFAEDNDSES. Residues 67-83 are compositionally biased toward low complexity; the sequence is KGGTSPKSRSKSPSASG. Residues 100 to 110 are compositionally biased toward basic and acidic residues; sequence RSTEKPARFAE. Residues 130-153 adopt a coiled-coil conformation; sequence ITDELRQYFAETEQHREELRRQHQ.

As to quaternary structure, part of the core SMN complex that contains SMN1, GEMIN2/SIP1, DDX20/GEMIN3, GEMIN4, GEMIN5, GEMIN6, GEMIN7, GEMIN8 and STRAP/UNRIP. Part of the SMN-Sm complex that contains SMN1, GEMIN2/SIP1, DDX20/GEMIN3, GEMIN4, GEMIN5, GEMIN6, GEMIN7, GEMIN8, STRAP/UNRIP and the Sm proteins SNRPB, SNRPD1, SNRPD2, SNRPD3, SNRPE, SNRPF and SNRPG. Interacts with GEMIN6; the interaction is direct. Interacts with GEMIN7; the interaction is direct. Interacts with SMN1; the interaction is direct. Interacts with GEMIN4; the interaction is direct.

Its subcellular location is the nucleus. It localises to the gem. The protein resides in the cytoplasm. Functionally, the SMN complex catalyzes the assembly of small nuclear ribonucleoproteins (snRNPs), the building blocks of the spliceosome, and thereby plays an important role in the splicing of cellular pre-mRNAs. Most spliceosomal snRNPs contain a common set of Sm proteins SNRPB, SNRPD1, SNRPD2, SNRPD3, SNRPE, SNRPF and SNRPG that assemble in a heptameric protein ring on the Sm site of the small nuclear RNA to form the core snRNP (Sm core). In the cytosol, the Sm proteins SNRPD1, SNRPD2, SNRPE, SNRPF and SNRPG are trapped in an inactive 6S pICln-Sm complex by the chaperone CLNS1A that controls the assembly of the core snRNP. To assemble core snRNPs, the SMN complex accepts the trapped 5Sm proteins from CLNS1A forming an intermediate. Binding of snRNA inside 5Sm triggers eviction of the SMN complex, thereby allowing binding of SNRPD3 and SNRPB to complete assembly of the core snRNP. This is Gem-associated protein 8 (GEMIN8) from Bos taurus (Bovine).